The sequence spans 116 residues: Protein Rev (116 aa).

A phosphoserine; by host CK2 mark is found at serine 5 and serine 8. A homomultimerization region spans residues 18-26 (LIKFLYQSN). The interval 25 to 49 (SNPPPSLEGTRQARRNRRRRWRERQ) is disordered. Residues 34–50 (TRQARRNRRRRWRERQR) carry the Nuclear localization signal and RNA-binding (RRE) motif. Over residues 36–47 (QARRNRRRRWRE) the composition is skewed to basic residues. The Nuclear export signal and binding to XPO1 signature appears at 73-84 (LPLPPLEKLTLD). 2 positions are modified to phosphoserine; by host: serine 92 and serine 99. Residues 92–116 (SGTQGVGSPQILVESPAILEPGTKE) form a disordered region.

It belongs to the HIV-1 REV protein family. In terms of assembly, homomultimer; when bound to the RRE. Multimeric assembly is essential for activity and may involve XPO1. Binds to human KPNB1, XPO1, TNPO1, RANBP5 and IPO7. Interacts with the viral Integrase. Interacts with human KHDRBS1. Interacts with human NAP1; this interaction decreases Rev multimerization and stimulates its activity. Interacts with human DEAD-box helicases DDX3 and DDX24; these interactions may serve for viral RNA export to the cytoplasm and packaging, respectively. Interacts with human PSIP1; this interaction may inhibit HIV-1 DNA integration by promoting dissociation of the Integrase-LEDGF/p75 complex. Asymmetrically arginine dimethylated at one site by host PRMT6. Methylation impairs the RNA-binding activity and export of viral RNA from the nucleus to the cytoplasm. Post-translationally, phosphorylated by protein kinase CK2. Presence of, and maybe binding to the N-terminus of the regulatory beta subunit of CK2 is necessary for CK2-mediated Rev's phosphorylation.

The protein resides in the host nucleus. It localises to the host nucleolus. The protein localises to the host cytoplasm. Its function is as follows. Escorts unspliced or incompletely spliced viral pre-mRNAs (late transcripts) out of the nucleus of infected cells. These pre-mRNAs carry a recognition sequence called Rev responsive element (RRE) located in the env gene, that is not present in fully spliced viral mRNAs (early transcripts). This function is essential since most viral proteins are translated from unspliced or partially spliced pre-mRNAs which cannot exit the nucleus by the pathway used by fully processed cellular mRNAs. Rev itself is translated from a fully spliced mRNA that readily exits the nucleus. Rev's nuclear localization signal (NLS) binds directly to KPNB1/Importin beta-1 without previous binding to KPNA1/Importin alpha-1. KPNB1 binds to the GDP bound form of RAN (Ran-GDP) and targets Rev to the nucleus. In the nucleus, the conversion from Ran-GDP to Ran-GTP dissociates Rev from KPNB1 and allows Rev's binding to the RRE in viral pre-mRNAs. Rev multimerization on the RRE via cooperative assembly exposes its nuclear export signal (NES) to the surface. Rev can then form a complex with XPO1/CRM1 and Ran-GTP, leading to nuclear export of the complex. Conversion from Ran-GTP to Ran-GDP mediates dissociation of the Rev/RRE/XPO1/RAN complex, so that Rev can return to the nucleus for a subsequent round of export. Beside KPNB1, also seems to interact with TNPO1/Transportin-1, RANBP5/IPO5 and IPO7/RANBP7 for nuclear import. The nucleoporin-like HRB/RIP is an essential cofactor that probably indirectly interacts with Rev to release HIV RNAs from the perinuclear region to the cytoplasm. This is Protein Rev from Human immunodeficiency virus type 1 group M subtype B (strain 89.6) (HIV-1).